The sequence spans 572 residues: MRTSQYMLSTLKETPADAEVISHQLMLRAGMIRKLASGLYTWLPTGLRVLRKVENIVREEMNNAGAIEVSMPVVQPADLWVESGRWDQYGPELLRFVDRGERPFVLGPTHEEVITDLIRNEISSYKQLPLNFFQIQTKFRDEVRPRFGVMRSREFLMKDAYSFHTSQESLQVTYDAMYAAYSQIFSRMDLDFRAVQADTGSIGGNASHEFQVLAASGEDDIVFSTDSDYAANIELAEAVAPKLGRAEAKEELHLVDTPNAKTIAELVEQFKLPVEKTVKTLLVKATEESGHKLVALLVRGDHELNEIKAEKIAQVASPLTFATEEEIRATIGAGPGSLGPVKLSIPVVVDRTVAAMSDFSAGANIDGKHYFGINWERDVALPQVADIRNVVEGDISPDGKGTLQIKRGIEVGHIFQLGSKYSEALKATVQGEDGRNQTLTMGCYGIGVTRVVAAAIEQNHDERGIIWPDAIAPFHVAILPMNMHKSFRVKEVAEDIYQQLRAKGIEVLLDDRKERPGVMFADMELIGVPHTIVIGDRNLDSEEIEYKHRRIGEKQMIKTNEIVDFLLANIVR.

Belongs to the class-II aminoacyl-tRNA synthetase family. ProS type 1 subfamily. Homodimer.

Its subcellular location is the cytoplasm. The catalysed reaction is tRNA(Pro) + L-proline + ATP = L-prolyl-tRNA(Pro) + AMP + diphosphate. Its function is as follows. Catalyzes the attachment of proline to tRNA(Pro) in a two-step reaction: proline is first activated by ATP to form Pro-AMP and then transferred to the acceptor end of tRNA(Pro). As ProRS can inadvertently accommodate and process non-cognate amino acids such as alanine and cysteine, to avoid such errors it has two additional distinct editing activities against alanine. One activity is designated as 'pretransfer' editing and involves the tRNA(Pro)-independent hydrolysis of activated Ala-AMP. The other activity is designated 'posttransfer' editing and involves deacylation of mischarged Ala-tRNA(Pro). The misacylated Cys-tRNA(Pro) is not edited by ProRS. This Pectobacterium carotovorum subsp. carotovorum (strain PC1) protein is Proline--tRNA ligase.